The sequence spans 711 residues: Ribosomal RNA large subunit methyltransferase K/L (711 aa).

Positions 43 to 154 constitute a THUMP domain; it reads TLYRTLLWSR…RENLVISLDL (112 aa).

Belongs to the methyltransferase superfamily. RlmKL family.

The protein localises to the cytoplasm. It catalyses the reaction guanosine(2445) in 23S rRNA + S-adenosyl-L-methionine = N(2)-methylguanosine(2445) in 23S rRNA + S-adenosyl-L-homocysteine + H(+). It carries out the reaction guanosine(2069) in 23S rRNA + S-adenosyl-L-methionine = N(2)-methylguanosine(2069) in 23S rRNA + S-adenosyl-L-homocysteine + H(+). In terms of biological role, specifically methylates the guanine in position 2445 (m2G2445) and the guanine in position 2069 (m7G2069) of 23S rRNA. In Haemophilus influenzae (strain PittGG), this protein is Ribosomal RNA large subunit methyltransferase K/L.